A 361-amino-acid chain; its full sequence is Phosphoserine aminotransferase (361 aa).

R42 contacts L-glutamate. Pyridoxal 5'-phosphate-binding positions include 76-77 (AR), W102, T153, D173, and Q196. At K197 the chain carries N6-(pyridoxal phosphate)lysine. 238–239 (NT) contributes to the pyridoxal 5'-phosphate binding site.

It belongs to the class-V pyridoxal-phosphate-dependent aminotransferase family. SerC subfamily. Homodimer. Requires pyridoxal 5'-phosphate as cofactor.

The protein resides in the cytoplasm. The enzyme catalyses O-phospho-L-serine + 2-oxoglutarate = 3-phosphooxypyruvate + L-glutamate. It catalyses the reaction 4-(phosphooxy)-L-threonine + 2-oxoglutarate = (R)-3-hydroxy-2-oxo-4-phosphooxybutanoate + L-glutamate. The protein operates within amino-acid biosynthesis; L-serine biosynthesis; L-serine from 3-phospho-D-glycerate: step 2/3. It participates in cofactor biosynthesis; pyridoxine 5'-phosphate biosynthesis; pyridoxine 5'-phosphate from D-erythrose 4-phosphate: step 3/5. In terms of biological role, catalyzes the reversible conversion of 3-phosphohydroxypyruvate to phosphoserine and of 3-hydroxy-2-oxo-4-phosphonooxybutanoate to phosphohydroxythreonine. The protein is Phosphoserine aminotransferase of Yersinia enterocolitica serotype O:8 / biotype 1B (strain NCTC 13174 / 8081).